The primary structure comprises 33 residues: MSDINATRLPIWGIGCDPCVGDDVAALTTRGEA.

Residues 1 to 10 constitute a propeptide that is removed on maturation; that stretch reads MSDINATRLP. Positions 11–18 form a cross-link, cyclopeptide (Ile-Pro); it reads IWGIGCDP. A cross-link (2'-cysteinyl-6'-hydroxytryptophan sulfoxide (Trp-Cys)) is located at residues 12-16; sequence WGIGC. Residues 19–33 constitute a propeptide that is removed on maturation; the sequence is CVGDDVAALTTRGEA.

It belongs to the MSDIN fungal toxin family. Processed by the macrocyclase-peptidase enzyme POPB to yield a toxic cyclic decapeptide. POPB first removes 10 residues from the N-terminus. Conformational trapping of the remaining peptide forces the enzyme to release this intermediate rather than proceed to macrocyclization. The enzyme rebinds the remaining peptide in a different conformation and catalyzes macrocyclization of the N-terminal 8 residues.

Its function is as follows. Toxin belonging to the bicyclic octapeptides amatoxins that acts by binding non-competitively to RNA polymerase II and greatly slowing the elongation of transcripts from target promoters. The polypeptide is Beta-amanitin proprotein (Amanita rimosa).